A 418-amino-acid polypeptide reads, in one-letter code: Acetylornithine aminotransferase (418 aa).

Residues 116 to 117 and Phe149 contribute to the pyridoxal 5'-phosphate site; that span reads GA. Arg152 contacts N(2)-acetyl-L-ornithine. 240–243 lines the pyridoxal 5'-phosphate pocket; it reads DEVQ. Lys269 carries the post-translational modification N6-(pyridoxal phosphate)lysine. Residue Ser296 coordinates N(2)-acetyl-L-ornithine. Thr297 contacts pyridoxal 5'-phosphate.

The protein belongs to the class-III pyridoxal-phosphate-dependent aminotransferase family. ArgD subfamily. In terms of assembly, homodimer. Pyridoxal 5'-phosphate is required as a cofactor.

It localises to the cytoplasm. It carries out the reaction N(2)-acetyl-L-ornithine + 2-oxoglutarate = N-acetyl-L-glutamate 5-semialdehyde + L-glutamate. Its pathway is amino-acid biosynthesis; L-arginine biosynthesis; N(2)-acetyl-L-ornithine from L-glutamate: step 4/4. This is Acetylornithine aminotransferase from Prochlorococcus marinus (strain MIT 9313).